Reading from the N-terminus, the 315-residue chain is Olfactory receptor 5A1 (315 aa).

Residues methionine 1–alanine 28 lie on the Extracellular side of the membrane. N-linked (GlcNAc...) asparagine glycosylation is present at asparagine 8. Residues leucine 29–isoleucine 52 form a helical membrane-spanning segment. At arginine 53–threonine 60 the chain is on the cytoplasmic side. Residues proline 61–proline 82 traverse the membrane as a helical segment. Over asparagine 83 to glutamine 103 the chain is Extracellular. Cysteine 100 and cysteine 192 form a disulfide bridge. The helical transmembrane segment at phenylalanine 104–tyrosine 123 threads the bilayer. The Cytoplasmic portion of the chain corresponds to aspartate 124–glycine 142. Residues leucine 143–isoleucine 161 form a helical membrane-spanning segment. The Extracellular portion of the chain corresponds to glutamine 162–serine 198. A helical transmembrane segment spans residues glutamine 199 to glycine 222. At tyrosine 223 to lysine 239 the chain is on the cytoplasmic side. The helical transmembrane segment at alanine 240–tyrosine 262 threads the bilayer. The Extracellular portion of the chain corresponds to leucine 263–lysine 275. A helical transmembrane segment spans residues valine 276 to leucine 295. Residues arginine 296–serine 315 are Cytoplasmic-facing.

Belongs to the G-protein coupled receptor 1 family.

The protein localises to the cell membrane. In terms of biological role, odorant receptor. This Homo sapiens (Human) protein is Olfactory receptor 5A1 (OR5A1).